Here is a 130-residue protein sequence, read N- to C-terminus: Small ribosomal subunit protein uS9 (130 aa).

This sequence belongs to the universal ribosomal protein uS9 family.

The polypeptide is Small ribosomal subunit protein uS9 (Marinobacter nauticus (strain ATCC 700491 / DSM 11845 / VT8) (Marinobacter aquaeolei)).